We begin with the raw amino-acid sequence, 121 residues long: Large ribosomal subunit protein uL18 (121 aa).

This sequence belongs to the universal ribosomal protein uL18 family. In terms of assembly, part of the 50S ribosomal subunit; part of the 5S rRNA/L5/L18/L25 subcomplex. Contacts the 5S and 23S rRNAs.

This is one of the proteins that bind and probably mediate the attachment of the 5S RNA into the large ribosomal subunit, where it forms part of the central protuberance. The sequence is that of Large ribosomal subunit protein uL18 from Albidiferax ferrireducens (strain ATCC BAA-621 / DSM 15236 / T118) (Rhodoferax ferrireducens).